The sequence spans 113 residues: MSQSRLDDLFAYVEERCLWQFFSRTWDREENIEGVLNQVCRLLTGQEPLRGTPQERLFYADALAMANDVRERFPWASQVNKEEIAFLIDGLKSRLVDVTITRSTNRELNHHLY.

As to quaternary structure, hexamer of two alpha, two beta, and two delta chains. Iron-sulfur cluster serves as cofactor. The cofactor is vanadium cation.

It carries out the reaction N2 + 8 reduced [2Fe-2S]-[ferredoxin] + 16 ATP + 16 H2O = H2 + 8 oxidized [2Fe-2S]-[ferredoxin] + 2 NH4(+) + 16 ADP + 16 phosphate + 6 H(+). Its function is as follows. The key enzymatic reactions in nitrogen fixation are catalyzed by the nitrogenase complex, which has 2 components: the iron protein (component 2) and a component 1 which is either a molybdenum-iron protein, a vanadium-iron, or an iron-iron protein. This is Nitrogenase vanadium-iron protein delta chain (vnfG) from Azotobacter salinestris.